A 280-amino-acid polypeptide reads, in one-letter code: uncharacterized protein (280 aa).

The signal sequence occupies residues 1–21 (MRPVIKVGLSTASVYPLRAEA).

This sequence to M.tuberculosis Rv0498 and S.coelicolor SCO3347.

This is an uncharacterized protein from Mycobacterium leprae (strain TN).